The chain runs to 455 residues: MLYFFGNSRFFLFFFYFFFYFVLVIKSSVGKNEYVSPDELNIKTSGFLGYKCDFSTEGIHNLEPDIVERRSVICSINSYFIYDKIKLIIPKQDDPKSKFKLLPENCFAKVYSDIEGKTEIPIEQTGLIEYTLEENDTNQDYSERIIQISPFNNKDIEFYCICDNTEQVISHIDGRSALVHVTVLKYPHKIVSVNLTDQKYPYLFDAYNKNDFINYKLEIGLKEGELLVLACKQIDNKCFQKNDESKNGDLYKTNKIIYHKDFAIFKAPIYVKSNNATAECKCKIDEANIYTLVVKPDYDEKVIYGCNFSKDLSFRTFTNNMNLLKYNENTNINCNVEISQPFYDHLIGISCPGTIIPDCFFQIYKPLTNELKSSEITYLDSQLNIGNIEYYEDIHGNNEIRIFSIVGAIPQSASFTCMCKMDKITGFMNIKIGSAYYAFLSKLFIIFIPLFFMWL.

The N-terminal stretch at 1-30 is a signal peptide; the sequence is MLYFFGNSRFFLFFFYFFFYFVLVIKSSVG. Residues 48 to 186 enclose the 6-Cys 1 domain; sequence LGYKCDFSTE…ALVHVTVLKY (139 aa). 2 disulfide bridges follow: Cys52/Cys74 and Cys106/Cys160. Residues Asn135, Asn194, Asn275, and Asn307 are each glycosylated (N-linked (GlcNAc...) asparagine). Residues 302 to 433 enclose the 6-Cys 2 domain; the sequence is VIYGCNFSKD…ITGFMNIKIG (132 aa). Cystine bridges form between Cys306/Cys334, Cys351/Cys419, and Cys359/Cys417. A lipid anchor (GPI-anchor amidated glycine) is attached at Gly433. Residues 434–455 constitute a propeptide, removed in mature form; it reads SAYYAFLSKLFIIFIPLFFMWL.

As to quaternary structure, heterodimer; heterodimerizes with PF230.

The protein resides in the cell surface. The protein localises to the cell membrane. Its function is as follows. Gametocyte surface protein required for male fertility. In Plasmodium berghei (strain Anka), this protein is Gametocyte surface protein P45/48 (PB45/48).